Reading from the N-terminus, the 151-residue chain is Probable transport accessory protein MmpS1 (151 aa).

2 helical membrane-spanning segments follow: residues 8 to 28 (FWIPMVIVIVVAVAAVTVSRL) and 81 to 101 (VVNAAVPWSFTIVTTLTAVVA).

This sequence belongs to the MmpS family.

The protein localises to the cell membrane. The polypeptide is Probable transport accessory protein MmpS1 (mmpS1) (Mycobacterium tuberculosis (strain CDC 1551 / Oshkosh)).